The sequence spans 265 residues: ATP synthase subunit a (265 aa).

Transmembrane regions (helical) follow at residues 26–46 (VHLD…FFFY), 88–108 (IGSL…IDLI), 132–152 (DISA…FYTI), 168–188 (PFNH…TLLA), 195–217 (FRLF…MYMA), and 231–251 (LIWA…FMML).

The protein belongs to the ATPase A chain family. In terms of assembly, F-type ATPases have 2 components, CF(1) - the catalytic core - and CF(0) - the membrane proton channel. CF(1) has five subunits: alpha(3), beta(3), gamma(1), delta(1), epsilon(1). CF(0) has three main subunits: a(1), b(2) and c(9-12). The alpha and beta chains form an alternating ring which encloses part of the gamma chain. CF(1) is attached to CF(0) by a central stalk formed by the gamma and epsilon chains, while a peripheral stalk is formed by the delta and b chains.

The protein localises to the cell inner membrane. Its function is as follows. Key component of the proton channel; it plays a direct role in the translocation of protons across the membrane. The sequence is that of ATP synthase subunit a from Histophilus somni (strain 2336) (Haemophilus somnus).